The sequence spans 264 residues: Apolipoprotein A-I (264 aa).

An N-terminal signal peptide occupies residues 1–18 (MKAVLLVVAALFLAGSQA). 2 consecutive repeat copies span residues 67 to 88 (LRLS…ADFG) and 89 to 110 (LATQ…QIVS). A 10 X approximate tandem repeats region spans residues 67 to 264 (LRLSDNWDTL…DQASKQLAAQ (198 aa)). The 3; half-length repeat unit spans residues 111–121 (EDLQDVKHKVQ). Repeat copies occupy residues 122-143 (PYLE…EKVR), 144-165 (PLGI…EKLT), 166-187 (PLGE…TQLA), 188-207 (PFSE…LKDS), and 208-229 (ATLA…EKAK). M193 carries the post-translational modification Methionine sulfoxide. A 9; half-length repeat occupies 230 to 240 (PALEDLRQGLL). Repeat 10 spans residues 241–264 (PVLENLKASILSSIDQASKQLAAQ).

This sequence belongs to the apolipoprotein A1/A4/E family. In terms of assembly, homodimer. Interacts with APOA1BP and CLU. Component of a sperm activating protein complex (SPAP), consisting of APOA1, an immunoglobulin heavy chain, an immunoglobulin light chain and albumin. Interacts with NDRG1. Interacts with SCGB3A2. Interacts with NAXE and YJEFN3. In terms of processing, glycosylated. Palmitoylated. Post-translationally, phosphorylation sites are present in the extracellular medium.

It is found in the secreted. Functionally, participates in the reverse transport of cholesterol from tissues to the liver for excretion by promoting cholesterol efflux from tissues and by acting as a cofactor for the lecithin cholesterol acyltransferase (LCAT). As part of the SPAP complex, activates spermatozoa motility. The protein is Apolipoprotein A-I (APOA1) of Cavia porcellus (Guinea pig).